Here is a 72-residue protein sequence, read N- to C-terminus: Protein SlyX (72 aa).

The disordered stretch occupies residues 53–72; the sequence is KSSQSSMLARPEDETPPPHY.

The protein belongs to the SlyX family.

The protein is Protein SlyX of Proteus mirabilis (strain HI4320).